The chain runs to 1063 residues: Lysine-specific demethylase phf2 (1063 aa).

The PHD-type zinc-finger motif lies at Pro5–Thr56. The region spanning Phe197–Lys353 is the JmjC domain. Thr246 is a binding site for 2-oxoglutarate. Positions 249 and 251 each coordinate Fe cation. 2-oxoglutarate-binding residues include Tyr259 and Lys266. Asn321 contacts Fe cation. Disordered stretches follow at residues Val448 to Leu546, Asn704 to Ile761, Gly773 to Asp864, and Tyr879 to Ala1045. Residues Ser460–Ser477 show a composition bias toward low complexity. Composition is skewed to basic and acidic residues over residues Pro513 to Pro540 and Lys723 to Gly745. Residues Arg746–Gly755 are compositionally biased toward basic residues. Polar residues predominate over residues Tyr776–Ala791. Low complexity predominate over residues Ser813–Ala833. Positions Arg842–Gln852 are enriched in basic residues. The segment covering Arg920 to Ala929 has biased composition (basic and acidic residues). The span at Ile953–Pro964 shows a compositional bias: basic residues. Positions Ile965–His975 are enriched in basic and acidic residues. 2 stretches are compositionally biased toward low complexity: residues Asp976–Ser988 and Ser1021–Ser1031. Ser1021 is subject to Phosphoserine; by PKA.

It belongs to the JHDM1 histone demethylase family. JHDM1D subfamily.

The protein localises to the nucleus. Its subcellular location is the nucleolus. The protein resides in the chromosome. It is found in the centromere. It localises to the kinetochore. Its function is as follows. Lysine demethylase that demethylates both histones and non-histone proteins. Mediates demethylation of dimethylated 'Lys-9' of histone H3 (H3K9me2). Recruited to trimethylated 'Lys-4' of histone H3 (H3K4me3) at rDNA promoters and promotes expression of rDNA. This is Lysine-specific demethylase phf2 (phf2) from Danio rerio (Zebrafish).